The primary structure comprises 627 residues: Protein EXECUTER 2, chloroplastic (627 aa).

3 disordered regions span residues 1–34, 212–277, and 308–359; these read MSAA…PSAA, PTKG…AKDS, and EAEL…SKSP. A chloroplast-targeting transit peptide spans 1-45; sequence MSAATACASPAAARPPLHIPLRSPPSAAHLPSAAASRRASSAACR. Low complexity predominate over residues 217-229; it reads SSASSVSSATAES. 2 stretches are compositionally biased toward acidic residues: residues 308-321 and 331-353; these read EAEL…ELVQ and SLED…SDSA.

The protein localises to the plastid. It is found in the chloroplast. Together with EX1, enables higher plants to perceive singlet oxygen as a stress signal in plastid that activates a genetically determined nuclear stress response program which triggers a programmed cell death (PCD). This transfer of singlet oxygen-induced stress-related signals from the plastid to the nucleus that triggers genetically controlled PCD pathway is unique to photosynthetic eukaryotes and operates under mild stress conditions, impeding photosystem II (PSII) without causing photooxidative damage of the plant. This chain is Protein EXECUTER 2, chloroplastic, found in Oryza sativa subsp. japonica (Rice).